Consider the following 234-residue polypeptide: Glutamine synthetase (234 aa).

A GS catalytic domain is found at 1 to 234 (KAQEPWFGIE…TRLLVETTLL (234 aa)). Residues 126-157 (GSGGHVNFSNRQPESPPAGKQSRSSAKKLGKR) form a disordered region.

It belongs to the glutamine synthetase family. As to quaternary structure, homooctamer.

The protein resides in the cytoplasm. The catalysed reaction is L-glutamate + NH4(+) + ATP = L-glutamine + ADP + phosphate + H(+). This is Glutamine synthetase from Dunaliella salina (Green alga).